A 177-amino-acid chain; its full sequence is Adenine phosphoribosyltransferase (177 aa).

It belongs to the purine/pyrimidine phosphoribosyltransferase family. In terms of assembly, homodimer.

It localises to the cytoplasm. The enzyme catalyses AMP + diphosphate = 5-phospho-alpha-D-ribose 1-diphosphate + adenine. It participates in purine metabolism; AMP biosynthesis via salvage pathway; AMP from adenine: step 1/1. Its function is as follows. Catalyzes a salvage reaction resulting in the formation of AMP, that is energically less costly than de novo synthesis. This Synechococcus sp. (strain RCC307) protein is Adenine phosphoribosyltransferase.